The primary structure comprises 361 residues: Lipoyl synthase 1, chloroplastic (361 aa).

[4Fe-4S] cluster contacts are provided by Cys87, Cys92, Cys98, Cys124, Cys128, Cys131, and Ser339. In terms of domain architecture, Radical SAM core spans 107–328 (GEGDGIATAT…KEYGESVGFR (222 aa)).

The protein belongs to the radical SAM superfamily. Lipoyl synthase family. [4Fe-4S] cluster serves as cofactor.

Its subcellular location is the plastid. It localises to the chloroplast. It carries out the reaction [[Fe-S] cluster scaffold protein carrying a second [4Fe-4S](2+) cluster] + N(6)-octanoyl-L-lysyl-[protein] + 2 oxidized [2Fe-2S]-[ferredoxin] + 2 S-adenosyl-L-methionine + 4 H(+) = [[Fe-S] cluster scaffold protein] + N(6)-[(R)-dihydrolipoyl]-L-lysyl-[protein] + 4 Fe(3+) + 2 hydrogen sulfide + 2 5'-deoxyadenosine + 2 L-methionine + 2 reduced [2Fe-2S]-[ferredoxin]. Its pathway is protein modification; protein lipoylation via endogenous pathway; protein N(6)-(lipoyl)lysine from octanoyl-[acyl-carrier-protein]: step 2/2. Its function is as follows. Catalyzes the radical-mediated insertion of two sulfur atoms into the C-6 and C-8 positions of the octanoyl moiety bound to the lipoyl domains of lipoate-dependent enzymes, thereby converting the octanoylated domains into lipoylated derivatives. The chain is Lipoyl synthase 1, chloroplastic from Zea mays (Maize).